The following is a 404-amino-acid chain: Queuine tRNA-ribosyltransferase catalytic subunit (404 aa).

The Proton acceptor role is filled by D98. Residues 98 to 102 (DSGGF), D152, Q195, and G222 contribute to the substrate site. An RNA binding region spans residues 253–259 (GVGYAED). Catalysis depends on D272, which acts as the Nucleophile. Residues 277–281 (TRTAR) form an RNA binding; important for wobble base 34 recognition region. Residues C310, C312, C315, and H347 each coordinate Zn(2+).

Belongs to the queuine tRNA-ribosyltransferase family. In terms of assembly, heterodimer of a catalytic subunit and an accessory subunit. Zn(2+) serves as cofactor.

The protein resides in the cytoplasm. Its subcellular location is the nucleus. The catalysed reaction is guanosine(34) in tRNA + queuine = queuosine(34) in tRNA + guanine. Functionally, catalytic subunit of the queuine tRNA-ribosyltransferase (TGT) that catalyzes the base-exchange of a guanine (G) residue with queuine (Q) at position 34 (anticodon wobble position) in tRNAs with GU(N) anticodons (tRNA-Asp, -Asn, -His and -Tyr), resulting in the hypermodified nucleoside queuosine (7-(((4,5-cis-dihydroxy-2-cyclopenten-1-yl)amino)methyl)-7-deazaguanosine). Catalysis occurs through a double-displacement mechanism. The nucleophile active site attacks the C1' of nucleotide 34 to detach the guanine base from the RNA, forming a covalent enzyme-RNA intermediate. The proton acceptor active site deprotonates the incoming queuine, allowing a nucleophilic attack on the C1' of the ribose to form the product. The chain is Queuine tRNA-ribosyltransferase catalytic subunit from Schizosaccharomyces pombe (strain 972 / ATCC 24843) (Fission yeast).